Consider the following 487-residue polypeptide: Protein DETOXIFICATION 11 (487 aa).

12 consecutive transmembrane segments (helical) span residues 35–55 (LICFAAPMAAVVITQSMLQII), 73–93 (FAISFCNVTGFSFIMGLSCAL), 122–142 (LVCLPLSLLWFNMGKLLVILG), 151–171 (AGRFAAWLIPGLFAYAVLQPL), 184–204 (LLITSCVVFCLHVPLCWLLVY), 211–231 (IGGALALSLSYWLYAIFLGSF), 264–284 (AAMLCLEWWSYELIILLSGLL), 293–313 (VLSVCLQTLSMTYSIPLAIAA), 330–350 (AAHIVVYAAMSLAVVDALMVG), 377–397 (MAPLVSISLILDSLQGVLSGV), 412–432 (FGAFYLWGIPIAASLAFWVHL), and 435–455 (VGLWIGIIAGAVLQTLLLALV).

Belongs to the multi antimicrobial extrusion (MATE) (TC 2.A.66.1) family.

It localises to the membrane. The sequence is that of Protein DETOXIFICATION 11 from Arabidopsis thaliana (Mouse-ear cress).